The following is a 183-amino-acid chain: Acireductone dioxygenase (183 aa).

Residues 1-21 (MVQAWYMDSDTTTDQREEHQL) are disordered. Fe(2+) is bound by residues His90, His92, Glu96, and His135. His90, His92, Glu96, and His135 together coordinate Ni(2+).

This sequence belongs to the acireductone dioxygenase (ARD) family. Requires Fe(2+) as cofactor. Ni(2+) serves as cofactor.

It is found in the cytoplasm. It localises to the nucleus. It carries out the reaction 1,2-dihydroxy-5-(methylsulfanyl)pent-1-en-3-one + O2 = 4-methylsulfanyl-2-oxobutanoate + formate + 2 H(+). It catalyses the reaction 1,2-dihydroxy-5-(methylsulfanyl)pent-1-en-3-one + O2 = 3-(methylsulfanyl)propanoate + CO + formate + 2 H(+). It participates in amino-acid biosynthesis; L-methionine biosynthesis via salvage pathway; L-methionine from S-methyl-5-thio-alpha-D-ribose 1-phosphate: step 5/6. Functionally, catalyzes 2 different reactions between oxygen and the acireductone 1,2-dihydroxy-3-keto-5-methylthiopentene (DHK-MTPene) depending upon the metal bound in the active site. Fe-containing acireductone dioxygenase (Fe-ARD) produces formate and 2-keto-4-methylthiobutyrate (KMTB), the alpha-ketoacid precursor of methionine in the methionine recycle pathway. Ni-containing acireductone dioxygenase (Ni-ARD) produces methylthiopropionate, carbon monoxide and formate, and does not lie on the methionine recycle pathway. This chain is Acireductone dioxygenase, found in Ixodes scapularis (Black-legged tick).